A 78-amino-acid polypeptide reads, in one-letter code: MTEAEIKDKVYDIIVSKMGVNKDQIKPESKFSDDLGADSLDTVELIMELENEFDVQIPDEDAEKIGTVQQAIDYIVKK.

Residues 4–78 (AEIKDKVYDI…QQAIDYIVKK (75 aa)) form the Carrier domain. An O-(pantetheine 4'-phosphoryl)serine modification is found at Ser39.

This sequence belongs to the acyl carrier protein (ACP) family. In terms of processing, 4'-phosphopantetheine is transferred from CoA to a specific serine of apo-ACP by AcpS. This modification is essential for activity because fatty acids are bound in thioester linkage to the sulfhydryl of the prosthetic group.

It is found in the cytoplasm. The protein operates within lipid metabolism; fatty acid biosynthesis. In terms of biological role, carrier of the growing fatty acid chain in fatty acid biosynthesis. The sequence is that of Acyl carrier protein from Chlorobium phaeovibrioides (strain DSM 265 / 1930) (Prosthecochloris vibrioformis (strain DSM 265)).